A 179-amino-acid polypeptide reads, in one-letter code: Protein Syd (179 aa).

This sequence belongs to the Syd family.

It localises to the cell inner membrane. Functionally, interacts with the SecY protein in vivo. May bind preferentially to an uncomplexed state of SecY, thus functioning either as a chelating agent for excess SecY in the cell or as a regulatory factor that negatively controls the translocase function. The protein is Protein Syd of Pseudoalteromonas translucida (strain TAC 125).